A 67-amino-acid polypeptide reads, in one-letter code: DNA-directed RNA polymerase subunit omega (67 aa).

Belongs to the RNA polymerase subunit omega family. As to quaternary structure, the RNAP catalytic core consists of 2 alpha, 1 beta, 1 beta' and 1 omega subunit. When a sigma factor is associated with the core the holoenzyme is formed, which can initiate transcription.

The enzyme catalyses RNA(n) + a ribonucleoside 5'-triphosphate = RNA(n+1) + diphosphate. Its function is as follows. Promotes RNA polymerase assembly. Latches the N- and C-terminal regions of the beta' subunit thereby facilitating its interaction with the beta and alpha subunits. The chain is DNA-directed RNA polymerase subunit omega from Polynucleobacter asymbioticus (strain DSM 18221 / CIP 109841 / QLW-P1DMWA-1) (Polynucleobacter necessarius subsp. asymbioticus).